The chain runs to 138 residues: HTH-type transcriptional regulator CymR (138 aa).

The 124-residue stretch at 2–125 folds into the HTH rrf2-type domain; sequence KISTKGRYGL…DSTTLEDLAS (124 aa). Positions 28–51 form a DNA-binding region, H-T-H motif; it reads LKSIAQTNNLSEHYLEQLVSPLRN.

In terms of assembly, homodimer. Forms homotetramers at higher concentrations of protein. Forms CymR(2):CysK(2) or CymR(4):CysK(4) complexes in the absence of O-acetylserine.

Its function is as follows. Master repressor of cysteine metabolism in B.subtilis. Controls the expression of genes involved either in cysteine synthesis from sulfide (cysK), sulfonates (ssu), or methionine (mccAB) or in cystine uptake (tcyP). Activity of CymR is positively regulated by CysK in response to cysteine availability. When cysteine is present, the pool of O-acetylserine (OAS) is low, which leads to the formation of a CymR-CysK complex and transcriptional repression of the CymR regulon occurs. In the absence of cysteine, the OAS pool is high and the CymR-CysK complex is mostly dissociated, leading to a faster dissociation of CymR from its DNA targets and the lifting of CymR-dependent repression. The polypeptide is HTH-type transcriptional regulator CymR (cymR) (Bacillus subtilis (strain 168)).